The primary structure comprises 103 residues: Muscarinic toxin BM14 (103 aa).

An N-terminal signal peptide occupies residues 1 to 21 (MKTLLLTLVVVTIICLDLGYT). Cystine bridges form between C24-C45, C27-C37, C38-C72, C76-C90, and C91-C96.

The protein belongs to the three-finger toxin family. Ancestral subfamily. Orphan group XVII sub-subfamily. In terms of tissue distribution, expressed by the venom gland.

The protein localises to the secreted. In terms of biological role, this toxin inhibits the binding of [3H]quinuclidinyl benzilate to the M2 muscarinic acetylcholine (mAchR) receptor subtype (CHRM2). This chain is Muscarinic toxin BM14, found in Bungarus multicinctus (Many-banded krait).